Reading from the N-terminus, the 120-residue chain is DNA-directed RNA polymerase II subunit rpb11 (120 aa).

Belongs to the archaeal Rpo11/eukaryotic RPB11/RPC19 RNA polymerase subunit family. Component of the RNA polymerase II (Pol II) complex consisting of 12 subunits.

The protein resides in the nucleus. DNA-dependent RNA polymerase catalyzes the transcription of DNA into RNA using the four ribonucleoside triphosphates as substrates. Component of RNA polymerase II which synthesizes mRNA precursors and many functional non-coding RNAs. Pol II is the central component of the basal RNA polymerase II transcription machinery. It is composed of mobile elements that move relative to each other. RPB11 is part of the core element with the central large cleft. In Dictyostelium discoideum (Social amoeba), this protein is DNA-directed RNA polymerase II subunit rpb11 (polr2j).